The sequence spans 652 residues: ATP-dependent zinc metalloprotease FtsH 2 (652 aa).

Residues 1–6 (MNKYRR) are Cytoplasmic-facing. The chain crosses the membrane as a helical span at residues 7–27 (GLALGALALAVFILIGVGISM). At 28-108 (RATPQPVNLT…PAGNGAISAD (81 aa)) the chain is on the extracellular side. A helical transmembrane segment spans residues 109–129 (LMLLLRILTIVAVGVVIFVLF). Over 130–652 (RRFGPSSIGT…RAAKPQIDRT (523 aa)) the chain is Cytoplasmic. 200 to 207 (GPPGTGKT) provides a ligand contact to ATP. H420 lines the Zn(2+) pocket. Residue E421 is part of the active site. Residues H424 and D496 each coordinate Zn(2+).

This sequence in the central section; belongs to the AAA ATPase family. In the C-terminal section; belongs to the peptidase M41 family. As to quaternary structure, homohexamer. Zn(2+) is required as a cofactor.

It is found in the cell membrane. In terms of biological role, acts as a processive, ATP-dependent zinc metallopeptidase for both cytoplasmic and membrane proteins. Plays a role in the quality control of integral membrane proteins. This chain is ATP-dependent zinc metalloprotease FtsH 2, found in Sphaerobacter thermophilus (strain ATCC 49802 / DSM 20745 / KCCM 41009 / NCIMB 13125 / S 6022).